Reading from the N-terminus, the 558-residue chain is Phosphatase and actin regulator 3 (558 aa).

Residues 1–11 (MAASEDGSSCL) show a composition bias toward polar residues. 3 disordered regions span residues 1-69 (MAAS…KLAT), 81-288 (KKKN…RPLP), and 300-366 (LATK…ENLM). Low complexity predominate over residues 18-33 (QSDPSFLSDSSATSTD). Thr-69 is subject to Phosphothreonine. The RPEL 1 repeat unit spans residues 92 to 117 (SALEKKMAGRQGREELIKQGLLEMME). Positions 94-108 (LEKKMAGRQGREELI) are enriched in basic and acidic residues. Residues 144 to 169 (ETLTSEGAQPGSPSASGTDQVSQDEL) are compositionally biased toward polar residues. Residues 228-239 (PSPPLLPTPPPK) are compositionally biased toward pro residues. Phosphoserine is present on Ser-229. At Thr-235 the chain carries Phosphothreonine. 2 stretches are compositionally biased toward basic and acidic residues: residues 300 to 341 (LATK…RDEA) and 354 to 363 (ATKDSEENKE). RPEL repeat units lie at residues 400–425 (ELLAVKLRNRPSKQELEDRNIFPRRT), 438–463 (MKLSKRLSQRPAVEELERRNILKQRN), and 476–501 (QRLTRKLNQRPTVDELRDRKILIRFS). A coiled-coil region spans residues 449–485 (AVEELERRNILKQRNDQTEQEERREIKQRLTRKLNQR).

Belongs to the phosphatase and actin regulator family. As to quaternary structure, binds PPP1CA and actin; thus inhibiting the protein phosphatase 1 (PP1) activity.

The protein resides in the nucleus matrix. This is Phosphatase and actin regulator 3 (Phactr3) from Mus musculus (Mouse).